Reading from the N-terminus, the 50-residue chain is Large ribosomal subunit protein eL39 (50 aa).

Residues 1–12 (MGKKSKASKKRL) are compositionally biased toward basic residues. Disordered stretches follow at residues 1–20 (MGKK…RQNS) and 30–50 (TNRD…DTDE).

This sequence belongs to the eukaryotic ribosomal protein eL39 family.

The chain is Large ribosomal subunit protein eL39 (rpl39e) from Halobacterium salinarum (strain ATCC 700922 / JCM 11081 / NRC-1) (Halobacterium halobium).